Consider the following 103-residue polypeptide: Small ribosomal subunit protein uS10 (103 aa).

The protein belongs to the universal ribosomal protein uS10 family. In terms of assembly, part of the 30S ribosomal subunit.

Functionally, involved in the binding of tRNA to the ribosomes. This is Small ribosomal subunit protein uS10 from Xylella fastidiosa (strain 9a5c).